Here is a 143-residue protein sequence, read N- to C-terminus: Large ribosomal subunit protein uL15 (143 aa).

The disordered stretch occupies residues 1 to 54 (MELNSIKPADGAKHAARRVGRGIGSGLGKTAGRGHKGQKSRSGGYHKVGFEGGQ). Residues 21-31 (RGIGSGLGKTA) show a composition bias toward gly residues.

This sequence belongs to the universal ribosomal protein uL15 family. Part of the 50S ribosomal subunit.

Binds to the 23S rRNA. This chain is Large ribosomal subunit protein uL15, found in Acidovorax ebreus (strain TPSY) (Diaphorobacter sp. (strain TPSY)).